A 343-amino-acid chain; its full sequence is GTPase Obg (343 aa).

An Obg domain is found at 1-159 (MKFLDQAKVY…LNIWLRLKLI (159 aa)). In terms of domain architecture, OBG-type G spans 160 to 327 (ADAGLVGLPN…VLRALMTVIA (168 aa)). GTP contacts are provided by residues 166–173 (GLPNAGKS), 191–195 (FTTLH), 212–215 (DIPG), 279–282 (SQVD), and 308–310 (SAV). Positions 173 and 193 each coordinate Mg(2+).

It belongs to the TRAFAC class OBG-HflX-like GTPase superfamily. OBG GTPase family. Monomer. Mg(2+) is required as a cofactor.

It is found in the cytoplasm. Functionally, an essential GTPase which binds GTP, GDP and possibly (p)ppGpp with moderate affinity, with high nucleotide exchange rates and a fairly low GTP hydrolysis rate. Plays a role in control of the cell cycle, stress response, ribosome biogenesis and in those bacteria that undergo differentiation, in morphogenesis control. In Mesorhizobium japonicum (strain LMG 29417 / CECT 9101 / MAFF 303099) (Mesorhizobium loti (strain MAFF 303099)), this protein is GTPase Obg.